The chain runs to 198 residues: Na(+)-translocating NADH-quinone reductase subunit E (198 aa).

A run of 6 helical transmembrane segments spans residues 11–31 (SVFI…FLAV), 35–55 (VSTA…SVPV), 77–97 (FLNF…LEMF), 110–130 (GIFL…SFMV), 140–160 (VVYG…LAGL), and 176–196 (LGIT…FSGI).

This sequence belongs to the NqrDE/RnfAE family. Composed of six subunits; NqrA, NqrB, NqrC, NqrD, NqrE and NqrF.

It localises to the cell inner membrane. It catalyses the reaction a ubiquinone + n Na(+)(in) + NADH + H(+) = a ubiquinol + n Na(+)(out) + NAD(+). In terms of biological role, NQR complex catalyzes the reduction of ubiquinone-1 to ubiquinol by two successive reactions, coupled with the transport of Na(+) ions from the cytoplasm to the periplasm. NqrA to NqrE are probably involved in the second step, the conversion of ubisemiquinone to ubiquinol. The polypeptide is Na(+)-translocating NADH-quinone reductase subunit E (Mannheimia succiniciproducens (strain KCTC 0769BP / MBEL55E)).